The chain runs to 404 residues: Tryptophan synthase beta chain (404 aa).

Lys94 is modified (N6-(pyridoxal phosphate)lysine).

The protein belongs to the TrpB family. As to quaternary structure, tetramer of two alpha and two beta chains. Pyridoxal 5'-phosphate serves as cofactor.

The enzyme catalyses (1S,2R)-1-C-(indol-3-yl)glycerol 3-phosphate + L-serine = D-glyceraldehyde 3-phosphate + L-tryptophan + H2O. It participates in amino-acid biosynthesis; L-tryptophan biosynthesis; L-tryptophan from chorismate: step 5/5. The beta subunit is responsible for the synthesis of L-tryptophan from indole and L-serine. The chain is Tryptophan synthase beta chain from Staphylococcus aureus (strain JH1).